The sequence spans 723 residues: Bifunctional lysine-specific demethylase and histidyl-hydroxylase NO66 (723 aa).

Disordered stretches follow at residues 13–34 (KKTA…QKAA) and 48–213 (SAVK…APSC). Residues 14 to 31 (KTAKKPAKKTTKQNRQKQ) show a composition bias toward basic residues. The segment covering 49 to 72 (AVKQNNGAKGKAKANGVKGNAKAQ) has biased composition (low complexity). Composition is skewed to acidic residues over residues 88-106 (ESVD…EDNE) and 114-129 (EDDY…EFEE). Over residues 133–155 (NSPSGSCSCSASSGSSNTENSPP) the composition is skewed to low complexity. Over residues 190 to 199 (EQKEGKELSK) the composition is skewed to basic and acidic residues. Residues 204-213 (KSAPAAAPSC) are compositionally biased toward low complexity. The 140-residue stretch at 379-518 (NPSTYLKGLR…NLMEALMPAV (140 aa)) folds into the JmjC domain. The Fe cation site is built by histidine 419, aspartate 421, and histidine 484.

This sequence belongs to the ROX family. NO66 subfamily. Fe(2+) serves as cofactor.

It is found in the nucleus. It catalyses the reaction N(6),N(6)-dimethyl-L-lysyl(36)-[histone H3] + 2 2-oxoglutarate + 2 O2 = L-lysyl(36)-[histone H3] + 2 formaldehyde + 2 succinate + 2 CO2. Oxygenase that can act as both a histone lysine demethylase and a ribosomal histidine hydroxylase. Specifically demethylates 'Lys-4' (H3K4me) and 'Lys-36' (H3K36me) of histone H3, thereby playing a central role in histone code. This Drosophila grimshawi (Hawaiian fruit fly) protein is Bifunctional lysine-specific demethylase and histidyl-hydroxylase NO66.